Reading from the N-terminus, the 90-residue chain is Bombyxin B-5 (90 aa).

The N-terminal stretch at 1 to 20 (MMKTAVMFILVVVISLTYSS) is a signal peptide. 3 disulfide bridges follow: Cys30–Cys75, Cys42–Cys88, and Cys74–Cys79. A propeptide spans 49–64 (GGAQYAPYWQETYLRS) (c peptide like).

Belongs to the insulin family. As to quaternary structure, heterodimer of a B chain and an A chain linked by two disulfide bonds.

It localises to the secreted. Brain peptide responsible for activation of prothoracic glands to produce ecdysone in insects. This chain is Bombyxin B-5 (BBXB5), found in Bombyx mori (Silk moth).